The primary structure comprises 309 residues: Aspartate carbamoyltransferase catalytic subunit (309 aa).

The carbamoyl phosphate site is built by R59 and T60. Position 87 (K87) interacts with L-aspartate. Carbamoyl phosphate is bound by residues R109, H139, and Q142. L-aspartate-binding residues include R172 and R224. A265 and P266 together coordinate carbamoyl phosphate.

Belongs to the aspartate/ornithine carbamoyltransferase superfamily. ATCase family. In terms of assembly, heterododecamer (2C3:3R2) of six catalytic PyrB chains organized as two trimers (C3), and six regulatory PyrI chains organized as three dimers (R2).

The catalysed reaction is carbamoyl phosphate + L-aspartate = N-carbamoyl-L-aspartate + phosphate + H(+). It functions in the pathway pyrimidine metabolism; UMP biosynthesis via de novo pathway; (S)-dihydroorotate from bicarbonate: step 2/3. Catalyzes the condensation of carbamoyl phosphate and aspartate to form carbamoyl aspartate and inorganic phosphate, the committed step in the de novo pyrimidine nucleotide biosynthesis pathway. This is Aspartate carbamoyltransferase catalytic subunit from Streptococcus uberis (strain ATCC BAA-854 / 0140J).